We begin with the raw amino-acid sequence, 164 residues long: Large ribosomal subunit protein bL9 (164 aa).

The protein belongs to the bacterial ribosomal protein bL9 family.

Its function is as follows. Binds to the 23S rRNA. The chain is Large ribosomal subunit protein bL9 from Borrelia hermsii (strain HS1 / DAH).